The primary structure comprises 651 residues: Probable potassium transport system protein Kup (651 aa).

The next 12 membrane-spanning stretches (helical) occupy residues 41–61 (LVLG…IYAF), 82–102 (VVSL…VLFV), 130–150 (LILG…VITP), 163–183 (IVAP…LVTL), 194–214 (VAIV…ASGL), 235–255 (FLTV…LAMT), 276–296 (WLWI…AFIL), 309–329 (MIPS…TVIA), 366–386 (IYIP…VLGF), 395–415 (AYGI…YIAM), 426–446 (ALPI…ANII), and 450–470 (EGGW…WTWV).

This sequence belongs to the HAK/KUP transporter (TC 2.A.72) family.

The protein localises to the cell inner membrane. The enzyme catalyses K(+)(in) + H(+)(in) = K(+)(out) + H(+)(out). In terms of biological role, transport of potassium into the cell. Likely operates as a K(+):H(+) symporter. The sequence is that of Probable potassium transport system protein Kup from Brucella abortus (strain S19).